A 156-amino-acid chain; its full sequence is Transcriptional repressor NrdR (156 aa).

A zinc finger lies at 3 to 34 (CPFCSETDTKVIDSRLVADGAQVRRRRECLTC). An ATP-cone domain is found at 49–139 (PRVIKQDGTR…VYRSFQDLSE (91 aa)).

It belongs to the NrdR family. Zn(2+) serves as cofactor.

Its function is as follows. Negatively regulates transcription of bacterial ribonucleotide reductase nrd genes and operons by binding to NrdR-boxes. In Saccharophagus degradans (strain 2-40 / ATCC 43961 / DSM 17024), this protein is Transcriptional repressor NrdR.